We begin with the raw amino-acid sequence, 634 residues long: Acetylcholinesterase (634 aa).

The first 23 residues, 1 to 23 (MKTSDILLLPTVLLTFLFHNCFA), serve as a signal peptide directing secretion. Residues cysteine 91 and cysteine 118 are joined by a disulfide bond. Residues asparagine 133 and asparagine 184 are each glycosylated (N-linked (GlcNAc...) asparagine). Serine 225 acts as the Acyl-ester intermediate in catalysis. A disulfide bridge links cysteine 279 with cysteine 290. Asparagine 283 carries N-linked (GlcNAc...) asparagine glycosylation. The active-site Charge relay system is the glutamate 352. N-linked (GlcNAc...) asparagine glycosylation is present at asparagine 368. Cysteine 427 and cysteine 580 are disulfide-bonded. Histidine 495 functions as the Charge relay system in the catalytic mechanism. N-linked (GlcNAc...) asparagine glycans are attached at residues asparagine 512 and asparagine 592.

This sequence belongs to the type-B carboxylesterase/lipase family. In terms of assembly, dimers and collagen-tailed forms, in which catalytic tetramers are associated with anchoring proteins that attach them to the basal lamina or to cell membranes. In the collagen-tailed forms, subunits are associated with a specific collagen, COLQ, which triggers the formation of isoform T tetramers from dimers.

The protein localises to the synapse. The protein resides in the secreted. It is found in the cell membrane. The catalysed reaction is acetylcholine + H2O = choline + acetate + H(+). Functionally, terminates signal transduction at the neuromuscular junction by rapid hydrolysis of the acetylcholine released into the synaptic cleft. The protein is Acetylcholinesterase (ache) of Danio rerio (Zebrafish).